The sequence spans 464 residues: Siroheme synthase (464 aa).

A precorrin-2 dehydrogenase /sirohydrochlorin ferrochelatase region spans residues 1 to 203; the sequence is MDYLPLFHNL…GQETEAERLL (203 aa). NAD(+) is bound by residues 22-23 and 43-44; these read EI and PQ. Serine 128 is modified (phosphoserine). The uroporphyrinogen-III C-methyltransferase stretch occupies residues 216–464; sequence GEVYLVGAGP…AWFEGRQSAD (249 aa). Position 225 (proline 225) interacts with S-adenosyl-L-methionine. Aspartate 248 serves as the catalytic Proton acceptor. The active-site Proton donor is the lysine 270. S-adenosyl-L-methionine contacts are provided by residues 301-303, isoleucine 306, 331-332, methionine 383, and glycine 412; these read GGD and TA.

This sequence in the N-terminal section; belongs to the precorrin-2 dehydrogenase / sirohydrochlorin ferrochelatase family. It in the C-terminal section; belongs to the precorrin methyltransferase family.

It carries out the reaction uroporphyrinogen III + 2 S-adenosyl-L-methionine = precorrin-2 + 2 S-adenosyl-L-homocysteine + H(+). It catalyses the reaction precorrin-2 + NAD(+) = sirohydrochlorin + NADH + 2 H(+). The catalysed reaction is siroheme + 2 H(+) = sirohydrochlorin + Fe(2+). It participates in cofactor biosynthesis; adenosylcobalamin biosynthesis; precorrin-2 from uroporphyrinogen III: step 1/1. It functions in the pathway cofactor biosynthesis; adenosylcobalamin biosynthesis; sirohydrochlorin from precorrin-2: step 1/1. Its pathway is porphyrin-containing compound metabolism; siroheme biosynthesis; precorrin-2 from uroporphyrinogen III: step 1/1. The protein operates within porphyrin-containing compound metabolism; siroheme biosynthesis; siroheme from sirohydrochlorin: step 1/1. It participates in porphyrin-containing compound metabolism; siroheme biosynthesis; sirohydrochlorin from precorrin-2: step 1/1. Multifunctional enzyme that catalyzes the SAM-dependent methylations of uroporphyrinogen III at position C-2 and C-7 to form precorrin-2 via precorrin-1. Then it catalyzes the NAD-dependent ring dehydrogenation of precorrin-2 to yield sirohydrochlorin. Finally, it catalyzes the ferrochelation of sirohydrochlorin to yield siroheme. This Azotobacter vinelandii (strain DJ / ATCC BAA-1303) protein is Siroheme synthase.